The primary structure comprises 296 residues: GTPase Era (296 aa).

The region spanning 3–170 (KSGFVTIVGR…KELMFKYIPE (168 aa)) is the Era-type G domain. Positions 11–18 (GRPNVGKS) are G1. 11 to 18 (GRPNVGKS) is a GTP binding site. The interval 37 to 41 (QTTRN) is G2. Residues 58–61 (DTPG) are G3. GTP is bound by residues 58 to 62 (DTPGI) and 120 to 123 (NKID). A G4 region spans residues 120–123 (NKID). Positions 149–151 (ISA) are G5. The KH type-2 domain maps to 201–278 (LSEEVPHGIA…YIRLWVKVKE (78 aa)).

It belongs to the TRAFAC class TrmE-Era-EngA-EngB-Septin-like GTPase superfamily. Era GTPase family. In terms of assembly, monomer.

The protein resides in the cytoplasm. It localises to the cell membrane. In terms of biological role, an essential GTPase that binds both GDP and GTP, with rapid nucleotide exchange. Plays a role in 16S rRNA processing and 30S ribosomal subunit biogenesis and possibly also in cell cycle regulation and energy metabolism. The chain is GTPase Era from Clostridium botulinum (strain Okra / Type B1).